The primary structure comprises 159 residues: Ribosomal RNA large subunit methyltransferase H (159 aa).

Residues L76, G108, and F127–F132 contribute to the S-adenosyl-L-methionine site.

The protein belongs to the RNA methyltransferase RlmH family. Homodimer.

It localises to the cytoplasm. It catalyses the reaction pseudouridine(1915) in 23S rRNA + S-adenosyl-L-methionine = N(3)-methylpseudouridine(1915) in 23S rRNA + S-adenosyl-L-homocysteine + H(+). Functionally, specifically methylates the pseudouridine at position 1915 (m3Psi1915) in 23S rRNA. This is Ribosomal RNA large subunit methyltransferase H from Streptococcus thermophilus (strain ATCC BAA-491 / LMD-9).